Here is a 1200-residue protein sequence, read N- to C-terminus: Hyalin (1200 aa).

HYR domains lie at 1–39 (SSHNPGQSFTTGTTTTVVYTATDAFANVGQCAFTITVTA), 40–123 (TDTT…NVIE), 124–207 (VDTT…NVIE), 208–292 (VDTT…NVIE), 293–376 (VDTT…NVVE), 377–460 (VDTT…NVVE), 461–544 (VDTT…TVEE), 546–629 (VDTT…TVIA), 630–713 (VDTT…TISA), 714–797 (VDTT…VINA), 798–881 (VDTT…TIGT), 882–966 (VDTM…TVFA), 967–1050 (VDTT…TVTA), 1051–1133 (QDTT…TVNT), and 1134–1200 (QDTT…FFSD).

In terms of assembly, homooligomer in presence of calcium. Post-translationally, glycosylated.

Its subcellular location is the secreted. It is found in the extracellular space. The protein resides in the extracellular matrix. Functionally, major constituent of the hyaline layer. The hyaline layer of echinoderm embryos is an extraembryonic matrix that functions as a substrate for cell adhesion through early development. This chain is Hyalin, found in Strongylocentrotus purpuratus (Purple sea urchin).